We begin with the raw amino-acid sequence, 197 residues long: GTP cyclohydrolase-2 (197 aa).

50–54 (RIHSE) is a binding site for GTP. Zn(2+) contacts are provided by Cys-55, Cys-66, and Cys-68. Residues Gln-71, 93-95 (EGR), and Thr-115 contribute to the GTP site. The active-site Proton acceptor is the Asp-127. Arg-129 serves as the catalytic Nucleophile. GTP is bound by residues Thr-150 and Lys-155.

This sequence belongs to the GTP cyclohydrolase II family. The cofactor is Zn(2+).

It catalyses the reaction GTP + 4 H2O = 2,5-diamino-6-hydroxy-4-(5-phosphoribosylamino)-pyrimidine + formate + 2 phosphate + 3 H(+). It participates in cofactor biosynthesis; riboflavin biosynthesis; 5-amino-6-(D-ribitylamino)uracil from GTP: step 1/4. In terms of biological role, catalyzes the conversion of GTP to 2,5-diamino-6-ribosylamino-4(3H)-pyrimidinone 5'-phosphate (DARP), formate and pyrophosphate. In Aeromonas hydrophila subsp. hydrophila (strain ATCC 7966 / DSM 30187 / BCRC 13018 / CCUG 14551 / JCM 1027 / KCTC 2358 / NCIMB 9240 / NCTC 8049), this protein is GTP cyclohydrolase-2.